A 158-amino-acid chain; its full sequence is Peptide deformylase (158 aa).

Fe cation contacts are provided by Cys-88 and His-130. Glu-131 is an active-site residue. Position 134 (His-134) interacts with Fe cation.

It belongs to the polypeptide deformylase family. The cofactor is Fe(2+).

The catalysed reaction is N-terminal N-formyl-L-methionyl-[peptide] + H2O = N-terminal L-methionyl-[peptide] + formate. Removes the formyl group from the N-terminal Met of newly synthesized proteins. Requires at least a dipeptide for an efficient rate of reaction. N-terminal L-methionine is a prerequisite for activity but the enzyme has broad specificity at other positions. The polypeptide is Peptide deformylase (Agathobacter rectalis (strain ATCC 33656 / DSM 3377 / JCM 17463 / KCTC 5835 / VPI 0990) (Eubacterium rectale)).